A 118-amino-acid chain; its full sequence is Large ribosomal subunit protein uL18 (118 aa).

Belongs to the universal ribosomal protein uL18 family. In terms of assembly, part of the 50S ribosomal subunit; part of the 5S rRNA/L5/L18/L25 subcomplex. Contacts the 5S and 23S rRNAs.

This is one of the proteins that bind and probably mediate the attachment of the 5S RNA into the large ribosomal subunit, where it forms part of the central protuberance. The chain is Large ribosomal subunit protein uL18 from Rickettsia typhi (strain ATCC VR-144 / Wilmington).